A 152-amino-acid polypeptide reads, in one-letter code: Probable flagellum biosynthesis repressor protein FlbT (152 aa).

This sequence belongs to the FlbT family.

Functionally, has a post-transcriptional repressor function in flagellum biogenesis. Associates with the 5'-UTR of fljK mRNA and promotes its degradation. In Brucella abortus (strain S19), this protein is Probable flagellum biosynthesis repressor protein FlbT.